Reading from the N-terminus, the 387-residue chain is Phosphoglycerate kinase (387 aa).

Residues 21-23 (DLN), Arg-36, 59-62 (HLGR), Arg-113, and Arg-146 each bind substrate. ATP contacts are provided by residues Lys-197, Glu-314, and 340–343 (GGDT).

The protein belongs to the phosphoglycerate kinase family. In terms of assembly, monomer.

It is found in the cytoplasm. The catalysed reaction is (2R)-3-phosphoglycerate + ATP = (2R)-3-phospho-glyceroyl phosphate + ADP. Its pathway is carbohydrate degradation; glycolysis; pyruvate from D-glyceraldehyde 3-phosphate: step 2/5. This Aliivibrio fischeri (strain MJ11) (Vibrio fischeri) protein is Phosphoglycerate kinase.